Reading from the N-terminus, the 168-residue chain is 2-C-methyl-D-erythritol 2,4-cyclodiphosphate synthase (168 aa).

Aspartate 13 and histidine 15 together coordinate a divalent metal cation. 4-CDP-2-C-methyl-D-erythritol 2-phosphate is bound by residues 13 to 15 (DVH) and 39 to 40 (HS). An a divalent metal cation-binding site is contributed by histidine 47. Residues 61–63 (DIG), 66–70 (FPDTD), phenylalanine 144, and lysine 147 contribute to the 4-CDP-2-C-methyl-D-erythritol 2-phosphate site.

The protein belongs to the IspF family. As to quaternary structure, homotrimer. Requires a divalent metal cation as cofactor.

The catalysed reaction is 4-CDP-2-C-methyl-D-erythritol 2-phosphate = 2-C-methyl-D-erythritol 2,4-cyclic diphosphate + CMP. Its pathway is isoprenoid biosynthesis; isopentenyl diphosphate biosynthesis via DXP pathway; isopentenyl diphosphate from 1-deoxy-D-xylulose 5-phosphate: step 4/6. In terms of biological role, involved in the biosynthesis of isopentenyl diphosphate (IPP) and dimethylallyl diphosphate (DMAPP), two major building blocks of isoprenoid compounds. Catalyzes the conversion of 4-diphosphocytidyl-2-C-methyl-D-erythritol 2-phosphate (CDP-ME2P) to 2-C-methyl-D-erythritol 2,4-cyclodiphosphate (ME-CPP) with a corresponding release of cytidine 5-monophosphate (CMP). This chain is 2-C-methyl-D-erythritol 2,4-cyclodiphosphate synthase, found in Cupriavidus metallidurans (strain ATCC 43123 / DSM 2839 / NBRC 102507 / CH34) (Ralstonia metallidurans).